Here is a 430-residue protein sequence, read N- to C-terminus: Adenylosuccinate synthetase (430 aa).

GTP contacts are provided by residues 12–18 (GDEGKGK) and 40–42 (GHT). Asp13 acts as the Proton acceptor in catalysis. The Mg(2+) site is built by Asp13 and Gly40. Residues 13–16 (DEGK), 38–41 (NAGH), Thr130, Arg144, Gln224, Thr239, and Arg303 contribute to the IMP site. His41 (proton donor) is an active-site residue. 299–305 (ATTGRPR) lines the substrate pocket. Residues Arg305, 331 to 333 (KLD), and 413 to 415 (SVG) contribute to the GTP site.

Belongs to the adenylosuccinate synthetase family. In terms of assembly, homodimer. The cofactor is Mg(2+).

Its subcellular location is the cytoplasm. It carries out the reaction IMP + L-aspartate + GTP = N(6)-(1,2-dicarboxyethyl)-AMP + GDP + phosphate + 2 H(+). The protein operates within purine metabolism; AMP biosynthesis via de novo pathway; AMP from IMP: step 1/2. Plays an important role in the de novo pathway of purine nucleotide biosynthesis. Catalyzes the first committed step in the biosynthesis of AMP from IMP. This Trichlorobacter lovleyi (strain ATCC BAA-1151 / DSM 17278 / SZ) (Geobacter lovleyi) protein is Adenylosuccinate synthetase.